Here is a 1403-residue protein sequence, read N- to C-terminus: DNA-directed RNA polymerase subunit beta' (1403 aa).

Zn(2+)-binding residues include Cys68, Cys70, Cys83, and Cys86. 3 residues coordinate Mg(2+): Asp459, Asp461, and Asp463. The Zn(2+) site is built by Cys814, Cys887, Cys894, and Cys897.

Belongs to the RNA polymerase beta' chain family. As to quaternary structure, the RNAP catalytic core consists of 2 alpha, 1 beta, 1 beta' and 1 omega subunit. When a sigma factor is associated with the core the holoenzyme is formed, which can initiate transcription. It depends on Mg(2+) as a cofactor. Zn(2+) is required as a cofactor.

The catalysed reaction is RNA(n) + a ribonucleoside 5'-triphosphate = RNA(n+1) + diphosphate. Functionally, DNA-dependent RNA polymerase catalyzes the transcription of DNA into RNA using the four ribonucleoside triphosphates as substrates. The chain is DNA-directed RNA polymerase subunit beta' from Solibacter usitatus (strain Ellin6076).